We begin with the raw amino-acid sequence, 531 residues long: MISIFKILSSPKPATTTTNIINPINIINGIRYFSSNQEDYPLFKKPVFNGKVLRGGRKVFKNDLIYSKKESHYNNNNNSNNNSNNNNNNNNSNNRNNNNFSNNRNNNNNRNNNNNNSNRNNNNSNDNNFRNNNNNNRRTEYYKNDFDSSKYISNKPEIRIFDLHEQAVYGINPVWVALSSGNRTFNALYVCGTLLPKLKELGIDIKNIENSKREYISDFDHNYGRETNQIEDENQDEQYSNQHDEQEQNEYEEEQEEEKVQEEEEDNNNNNNIKKTTFNRYNDRKNLVALKEIVKNSFKLKIPVRSVNKGTLDSFSKGRPHQGIILDASPLTLLNIDFLEKFDINERVNKRMNGGGGGGGGGGGNKINNDKYPLWLVLDELWDPQNVGAIIRNCSFFNIDGVVISNKNSSPITPAASKSSSGACESFVINRTESIEGFLKSSQRNGWNVVGTSLDDLNENQPCLDINQIKLDQPTILILGNEGFGLKPSVLEICNKTIKIVGGNYKIDSLNVSVTSGILIHTLLSSGTLPK.

The transit peptide at 1-40 (MISIFKILSSPKPATTTTNIINPINIINGIRYFSSNQEDY) directs the protein to the mitochondrion. Disordered stretches follow at residues 70–141 (ESHY…RTEY) and 230–277 (IEDE…KKTT). The span at 74-136 (NNNNNSNNNS…NNFRNNNNNN (63 aa)) shows a compositional bias: low complexity. The segment covering 247 to 267 (EQNEYEEEQEEEKVQEEEEDN) has biased composition (acidic residues).

It belongs to the class IV-like SAM-binding methyltransferase superfamily. RNA methyltransferase TrmH family.

Its subcellular location is the mitochondrion. The catalysed reaction is a uridine in rRNA + S-adenosyl-L-methionine = a 2'-O-methyluridine in rRNA + S-adenosyl-L-homocysteine + H(+). S-adenosyl-L-methionine-dependent 2'-O-ribose methyltransferase that catalyzes the formation of a 2'-O-methylguanosine in the mitochondrial large subunit ribosomal RNA (mtLSU rRNA), a universally conserved modification in the peptidyl transferase domain of the mtLSU rRNA. The sequence is that of rRNA methyltransferase 1, mitochondrial (mrm1) from Dictyostelium discoideum (Social amoeba).